The chain runs to 461 residues: Homocitrate synthase (461 aa).

Positions 4 to 259 (VGILDSTLRE…IEVVKLDKLQ (256 aa)) constitute a Pyruvate carboxyltransferase domain. Arginine 12 contributes to the 2-oxoglutarate binding site. Glutamate 13 contacts Mg(2+). 3 residues coordinate 2-oxoglutarate: histidine 76, arginine 136, and threonine 170. Histidine 198 and histidine 200 together coordinate Mg(2+). Catalysis depends on histidine 292, which acts as the Proton acceptor.

Belongs to the alpha-IPM synthase/homocitrate synthase family. Homocitrate synthase LYS20/LYS21 subfamily. Requires Mg(2+) as cofactor. The cofactor is Mn(2+).

It catalyses the reaction acetyl-CoA + 2-oxoglutarate + H2O = (2R)-homocitrate + CoA + H(+). Its pathway is amino-acid biosynthesis; L-lysine biosynthesis via AAA pathway; L-alpha-aminoadipate from 2-oxoglutarate: step 1/5. Functionally, catalyzes the aldol-type condensation of 2-oxoglutarate with acetyl-CoA to yield homocitrate. Carries out the first step of the alpha-aminoadipate (AAA) lysine biosynthesis pathway. The polypeptide is Homocitrate synthase (Saccharolobus islandicus (strain Y.N.15.51 / Yellowstone #2) (Sulfolobus islandicus)).